The chain runs to 131 residues: Hydrophilin PGA14 (131 aa).

Positions 1–18 (MKFTTVATVFAISSLAAA) are cleaved as a signal peptide. 2 stretches are compositionally biased toward basic and acidic residues: residues 42–59 (YGRF…ETGT) and 79–96 (KESD…RDSK). The disordered stretch occupies residues 42-110 (YGRFDKTSRS…NSTTSSGNNG (69 aa)). N-linked (GlcNAc...) asparagine glycans are attached at residues Asn-97 and Asn-101. Positions 97–110 (NASSNSTTSSGNNG) are enriched in low complexity. A lipid anchor (GPI-anchor amidated serine) is attached at Ser-105. Positions 106 to 131 (SGNNGVATGVSLGLAGVLAVGAALVI) are cleaved as a propeptide — removed in mature form.

It belongs to the PGA14 family. Post-translationally, the GPI-anchor is attached to the protein in the endoplasmic reticulum and serves to target the protein to the cell surface. There, the glucosamine-inositol phospholipid moiety is cleaved off and the GPI-modified mannoprotein is covalently attached via its lipidless GPI glycan remnant to the 1,6-beta-glucan of the outer cell wall layer.

It localises to the secreted. Its subcellular location is the cell wall. The protein localises to the membrane. Its function is as follows. Hydrophilin which is essential to overcome the simple stress of the desiccation-rehydration process. In Candida albicans (strain SC5314 / ATCC MYA-2876) (Yeast), this protein is Hydrophilin PGA14 (PGA14).